The sequence spans 332 residues: UDP-N-acetylenolpyruvoylglucosamine reductase (332 aa).

An FAD-binding PCMH-type domain is found at 15 to 184 (IDVSAACFLE…TYVSFRLSKR (170 aa)). Arginine 160 is an active-site residue. Serine 232 (proton donor) is an active-site residue. Glutamate 328 is a catalytic residue.

Belongs to the MurB family. FAD is required as a cofactor.

Its subcellular location is the cytoplasm. The enzyme catalyses UDP-N-acetyl-alpha-D-muramate + NADP(+) = UDP-N-acetyl-3-O-(1-carboxyvinyl)-alpha-D-glucosamine + NADPH + H(+). Its pathway is cell wall biogenesis; peptidoglycan biosynthesis. In terms of biological role, cell wall formation. The polypeptide is UDP-N-acetylenolpyruvoylglucosamine reductase (Bacteroides fragilis (strain YCH46)).